The following is a 600-amino-acid chain: Pentatricopeptide repeat-containing protein At3g29230 (600 aa).

13 PPR repeats span residues 50–80, 81–115, 116–150, 151–183, 184–218, 219–245, 246–276, 279–313, 314–348, 349–379, 380–414, 415–445, and 451–481; these read DLHI…VQEP, NVHL…GLFA, DNFT…GLSS, DIYV…MSER, DTVS…DLIS, WNTM…MPER, NTVS…MPLP, NVVT…GLKF, DAAA…NLGS, NAYV…IPKK, DLVS…GIRP, DKVT…MEKV, and QVEH…MPME. The type E motif stretch occupies residues 486–561; the sequence is IWGALLGACR…PSGASSVELE (76 aa). The interval 562 to 592 is type E(+) motif; it reads DGIHEFTVFDKSHPKSDQIYQMLGSLIEPPD.

Belongs to the PPR family. PCMP-E subfamily.

The protein is Pentatricopeptide repeat-containing protein At3g29230 (PCMP-E27) of Arabidopsis thaliana (Mouse-ear cress).